The chain runs to 212 residues: 3-isopropylmalate dehydratase small subunit 2 (212 aa).

It belongs to the LeuD family. LeuD type 1 subfamily. In terms of assembly, heterodimer of LeuC and LeuD.

The catalysed reaction is (2R,3S)-3-isopropylmalate = (2S)-2-isopropylmalate. The protein operates within amino-acid biosynthesis; L-leucine biosynthesis; L-leucine from 3-methyl-2-oxobutanoate: step 2/4. Catalyzes the isomerization between 2-isopropylmalate and 3-isopropylmalate, via the formation of 2-isopropylmaleate. The polypeptide is 3-isopropylmalate dehydratase small subunit 2 (Chromobacterium violaceum (strain ATCC 12472 / DSM 30191 / JCM 1249 / CCUG 213 / NBRC 12614 / NCIMB 9131 / NCTC 9757 / MK)).